The sequence spans 124 residues: Small ribosomal subunit protein uS13 (124 aa).

The interval 95–124 is disordered; sequence GLPVRGQRTKTNARTRKGPKRTIAGKKKAR.

Belongs to the universal ribosomal protein uS13 family. As to quaternary structure, part of the 30S ribosomal subunit. Forms a loose heterodimer with protein S19. Forms two bridges to the 50S subunit in the 70S ribosome.

Located at the top of the head of the 30S subunit, it contacts several helices of the 16S rRNA. In the 70S ribosome it contacts the 23S rRNA (bridge B1a) and protein L5 of the 50S subunit (bridge B1b), connecting the 2 subunits; these bridges are implicated in subunit movement. Contacts the tRNAs in the A and P-sites. The protein is Small ribosomal subunit protein uS13 of Mycobacterium marinum (strain ATCC BAA-535 / M).